Reading from the N-terminus, the 1837-residue chain is Zinc finger SWIM domain-containing protein 8 (1837 aa).

Residues Ser36, Ser48, and Ser53 each carry the phosphoserine modification. Residues 45–65 form a disordered region; it reads RKQSAGPNSPTGGGGGGGSGG. A compositionally biased stretch (gly residues) spans 55 to 65; it reads TGGGGGGGSGG. The segment at 172 to 208 adopts an SWIM-type zinc-finger fold; the sequence is YNVAVMFDRCRVTSCSCTCGAGAKWCTHVVALCLFRI. Ser437 is modified (phosphoserine). Disordered stretches follow at residues 514–727, 803–823, and 1016–1232; these read SRPG…EEDD, NPPD…KVST, and SQTH…VPNQ. Composition is skewed to basic and acidic residues over residues 523-532 and 566-575; these read GLEESRDRPR and LSAEGGDKAL. A Phosphoserine modification is found at Ser567. The span at 579-602 shows a compositional bias: gly residues; that stretch reads GPGGGKAKALGGAGSGSKGSAGGG. Positions 1019–1040 are enriched in polar residues; that stretch reads HKPQTLSSFYSSSRPTTASQRS. Residues 1119 to 1130 show a composition bias toward gly residues; the sequence is SRGGYNGRGWGS. Thr1139 is modified (phosphothreonine). Polar residues predominate over residues 1144 to 1159; sequence IDSSAPETTSDSSPTL. Phosphoserine is present on residues Ser1153, Ser1156, and Ser1160. Positions 1174–1209 are enriched in low complexity; it reads GRGQDSDSISSSSSDSLGSSSSSGSRRASASGGARA. Positions 1210-1226 are enriched in basic and acidic residues; it reads KTVEVGRYKGRRPESHA. At Ser1267 the chain carries Phosphoserine. Disordered regions lie at residues 1442 to 1464 and 1635 to 1656; these read SASG…GGPG and QPSP…SQPV. The segment covering 1447 to 1464 has biased composition (gly residues); that stretch reads RAGGEAGRGMPEGRGGPG. Position 1836 is a phosphoserine (Ser1836).

It belongs to the ZSWIM8 family. In terms of assembly, component of the SCF-like E3 ubiquitin-protein ligase complex which contains CUL3, RBX1, ELOB, ELOC and ZSWIM8. As to quaternary structure, (Microbial infection) Interacts with Zika virus protein NS5; this interaction allows STAT2 binding and subsequent proteasomal degradation.

It is found in the cytoplasm. The protein resides in the cytosol. The protein operates within protein modification; protein ubiquitination. Its function is as follows. Substrate recognition component of a SCF-like E3 ubiquitin-protein ligase complex that promotes target-directed microRNA degradation (TDMD), a process that mediates degradation of microRNAs (miRNAs). The SCF-like E3 ubiquitin-protein ligase complex acts by catalyzing ubiquitination and subsequent degradation of AGO proteins (AGO1, AGO2, AGO3 and/or AGO4), thereby exposing miRNAs for degradation. Specifically recognizes and binds AGO proteins when they are engaged with a TDMD target. May also act as a regulator of axon guidance: specifically recognizes misfolded ROBO3 and promotes its ubiquitination and subsequent degradation. Plays an essential role for proper embryonic development of heart and lung. Controls protein quality of DAB1, a key signal molecule for brain development, thus protecting its signaling strength. Mechanistically, recognizes intrinsically disordered regions of DAB1 and eliminates misfolded DAB1 that cannot be properly phosphorylated. Functionally, (Microbial infection) Participates in Zika virus inhibition of IFN signaling by acting as a scaffold protein to connect ZSWIM8/CUL3 ligase complex and STAT2, leading to STAT2 degradation. In Homo sapiens (Human), this protein is Zinc finger SWIM domain-containing protein 8.